The primary structure comprises 275 residues: Transcription regulator AOL_s00215g275 (275 aa).

Disordered regions lie at residues 13-65 and 84-108; these read TPLP…SSIG and ILQQ…RQRL. Positions 14–26 are enriched in polar residues; the sequence is PLPSLNSSRSPQR. Positions 27 to 40 are enriched in low complexity; sequence TPSLGSSSTSSLSP. Over residues 47–60 the composition is skewed to polar residues; it reads TPSTPESNDSGLTL. A compositionally biased stretch (basic residues) spans 88 to 106; that stretch reads KSRHQNQPSRRHKQKNRRQ.

Functionally, regulatory protein; part of the gene cluster that mediates the biosynthesis of sesquiterpenyl epoxy-cyclohexenoids (SECs) such as anthrobotrisins and arthrosporols, metabolites that possess a novel hybrid carbon skeleton consisting of a polyketide-derived epoxycyclohexenol combined with a terpenoid-derived monocyclic sesquiterpenol substructure (PKS-PTS hybrid). The SEC pathway plays an important role for fungal soil colonization via decreasing fungal nematode-capturing ability. AOL_s00215g275 can perform multiple functions in fungal growth and development via regulating the SEC biosynthesis, TCA cycle, and septa formation. Also involved in inhibiting conidial formation, germination, and nematicidal activity but promotes trap production. Plays a role in fungal resistances and significantly regulates the fungal morphology and responses to chemical stressors such as cell-wall-perturbing agents (SDS and Congo red), osmotic agents (NaCl and sorbitol), or the oxidant H(2)O(2). This is Transcription regulator AOL_s00215g275 from Arthrobotrys oligospora (strain ATCC 24927 / CBS 115.81 / DSM 1491) (Nematode-trapping fungus).